The primary structure comprises 450 residues: Adenylosuccinate lyase (450 aa).

Residues 9–10 (RY), 75–77 (HHD), and 101–102 (TS) each bind N(6)-(1,2-dicarboxyethyl)-AMP. His149 serves as the catalytic Proton donor/acceptor. Gln223 lines the N(6)-(1,2-dicarboxyethyl)-AMP pocket. The Proton donor/acceptor role is filled by Ser273. Residues Ser274, 279–281 (KRN), and 318–322 (SVERV) each bind N(6)-(1,2-dicarboxyethyl)-AMP.

It belongs to the lyase 1 family. Adenylosuccinate lyase subfamily. Homotetramer. Residues from neighboring subunits contribute catalytic and substrate-binding residues to each active site.

The catalysed reaction is N(6)-(1,2-dicarboxyethyl)-AMP = fumarate + AMP. It catalyses the reaction (2S)-2-[5-amino-1-(5-phospho-beta-D-ribosyl)imidazole-4-carboxamido]succinate = 5-amino-1-(5-phospho-beta-D-ribosyl)imidazole-4-carboxamide + fumarate. It functions in the pathway purine metabolism; AMP biosynthesis via de novo pathway; AMP from IMP: step 2/2. Its pathway is purine metabolism; IMP biosynthesis via de novo pathway; 5-amino-1-(5-phospho-D-ribosyl)imidazole-4-carboxamide from 5-amino-1-(5-phospho-D-ribosyl)imidazole-4-carboxylate: step 2/2. In terms of biological role, catalyzes two reactions in de novo purine nucleotide biosynthesis. Catalyzes the breakdown of 5-aminoimidazole- (N-succinylocarboxamide) ribotide (SAICAR or 2-[5-amino-1-(5-phospho-beta-D-ribosyl)imidazole-4-carboxamido]succinate) to 5-aminoimidazole-4-carboxamide ribotide (AICAR or 5-amino-1-(5-phospho-beta-D-ribosyl)imidazole-4-carboxamide) and fumarate, and of adenylosuccinate (ADS or N(6)-(1,2-dicarboxyethyl)-AMP) to adenosine monophosphate (AMP) and fumarate. This chain is Adenylosuccinate lyase (purB), found in Pyrococcus abyssi (strain GE5 / Orsay).